Reading from the N-terminus, the 203-residue chain is Reticulon-like protein B12 (203 aa).

Residues 24–203 (VADVMLWRKK…WANPENKKLS (180 aa)) enclose the Reticulon domain. 3 consecutive transmembrane segments (helical) span residues 34–54 (NVSV…EAFA), 55–75 (YTIF…LFLW), and 132–152 (VAVS…QTLC).

It localises to the endoplasmic reticulum membrane. The chain is Reticulon-like protein B12 (RTNLB12) from Arabidopsis thaliana (Mouse-ear cress).